We begin with the raw amino-acid sequence, 422 residues long: Serine--tRNA ligase (422 aa).

227–229 (TSE) serves as a coordination point for L-serine. ATP contacts are provided by residues 258-260 (RRE) and V274. E281 is an L-serine binding site. Position 345–348 (345–348 (ELTS)) interacts with ATP. T380 contacts L-serine.

Belongs to the class-II aminoacyl-tRNA synthetase family. Type-1 seryl-tRNA synthetase subfamily. As to quaternary structure, homodimer. The tRNA molecule binds across the dimer.

Its subcellular location is the cytoplasm. It catalyses the reaction tRNA(Ser) + L-serine + ATP = L-seryl-tRNA(Ser) + AMP + diphosphate + H(+). It carries out the reaction tRNA(Sec) + L-serine + ATP = L-seryl-tRNA(Sec) + AMP + diphosphate + H(+). The protein operates within aminoacyl-tRNA biosynthesis; selenocysteinyl-tRNA(Sec) biosynthesis; L-seryl-tRNA(Sec) from L-serine and tRNA(Sec): step 1/1. Catalyzes the attachment of serine to tRNA(Ser). Is also able to aminoacylate tRNA(Sec) with serine, to form the misacylated tRNA L-seryl-tRNA(Sec), which will be further converted into selenocysteinyl-tRNA(Sec). This is Serine--tRNA ligase from Thermobifida fusca (strain YX).